The sequence spans 381 residues: Pentraxin-related protein PTX3 (381 aa).

The signal sequence occupies residues 1–17 (MHLLAILFCALWSAVLA). Coiled coils occupy residues 74–101 (LQATDDVLRGELQRLREELGRLAESLAR) and 143–167 (EEAGRALAAVLEELRQTRADLHAVQ). Cystine bridges form between C179/C357 and C210/C271. Residues 179–381 (CETAILFPMR…QPHGGAQYVS (203 aa)) form the Pentraxin (PTX) domain. A glycan (N-linked (GlcNAc...) asparagine) is linked at N220.

In terms of assembly, homooctamer; disulfide-linked. Binds to C1q. As to quaternary structure, (Microbial infection) Interacts with SARS coronavirus-2/SARS-CoV-2 Nucleoprotein and Spike protein homotrimer. Post-translationally, glycosylated.

It is found in the secreted. Plays a role in the regulation of innate resistance to pathogens, inflammatory reactions, possibly clearance of self-components and female fertility. This is Pentraxin-related protein PTX3 from Homo sapiens (Human).